Consider the following 338-residue polypeptide: Bifunctional methylenetetrahydrofolate dehydrogenase/cyclohydrolase 2, mitochondrial (338 aa).

Substrate contacts are provided by residues 89–93 (YVRNK) and 136–138 (VQL). Residues 205–207 (GRS) and arginine 238 contribute to the NAD(+) site. 314-318 (PGGVG) is a substrate binding site.

The protein belongs to the tetrahydrofolate dehydrogenase/cyclohydrolase family. Mg(2+) is required as a cofactor. Widely expressed.

It localises to the mitochondrion inner membrane. The enzyme catalyses (6R)-5,10-methylene-5,6,7,8-tetrahydrofolate + NADP(+) = (6R)-5,10-methenyltetrahydrofolate + NADPH. It catalyses the reaction (6R)-5,10-methylene-5,6,7,8-tetrahydrofolate + NAD(+) = (6R)-5,10-methenyltetrahydrofolate + NADH. It carries out the reaction (6R)-5,10-methenyltetrahydrofolate + H2O = (6R)-10-formyltetrahydrofolate + H(+). The protein operates within one-carbon metabolism; tetrahydrofolate interconversion. Bifunctional mitochondrial folate-interconverting enzyme that has both NAD/NADP-dependent methylenetetrahydrofolate dehydrogenase and methenyltetrahydrofolate cyclohydrolase activities. Its function is as follows. Has no NAD/NADP-dependent methylenetetrahydrofolate dehydrogenase activity. This is Bifunctional methylenetetrahydrofolate dehydrogenase/cyclohydrolase 2, mitochondrial from Rattus norvegicus (Rat).